Consider the following 484-residue polypeptide: Glycogen synthase 2 (484 aa).

ADP-alpha-D-glucose is bound at residue Arg-15.

The protein belongs to the glycosyltransferase 1 family. Bacterial/plant glycogen synthase subfamily.

It catalyses the reaction [(1-&gt;4)-alpha-D-glucosyl](n) + ADP-alpha-D-glucose = [(1-&gt;4)-alpha-D-glucosyl](n+1) + ADP + H(+). Its pathway is glycan biosynthesis; glycogen biosynthesis. Its function is as follows. Synthesizes alpha-1,4-glucan chains using ADP-glucose. This chain is Glycogen synthase 2, found in Geobacter sulfurreducens (strain ATCC 51573 / DSM 12127 / PCA).